The following is a 476-amino-acid chain: uncharacterized protein (476 aa).

Positions 147–204 (DVRLAELRRRRAELEAEIAAVEAGDIAVLDPTAVRDRYQQLSTTARELLSDFREVEEN) form a coiled coil.

This is an uncharacterized protein from Mycolicibacterium smegmatis (strain ATCC 700084 / mc(2)155) (Mycobacterium smegmatis).